We begin with the raw amino-acid sequence, 134 residues long: Ribosome-binding factor A (134 aa).

This sequence belongs to the RbfA family. In terms of assembly, monomer. Binds 30S ribosomal subunits, but not 50S ribosomal subunits or 70S ribosomes.

It localises to the cytoplasm. In terms of biological role, one of several proteins that assist in the late maturation steps of the functional core of the 30S ribosomal subunit. Associates with free 30S ribosomal subunits (but not with 30S subunits that are part of 70S ribosomes or polysomes). Required for efficient processing of 16S rRNA. May interact with the 5'-terminal helix region of 16S rRNA. This is Ribosome-binding factor A from Synechococcus sp. (strain CC9311).